Reading from the N-terminus, the 525-residue chain is Peptide chain release factor 3 (525 aa).

The tr-type G domain occupies Asn11–Ser279. GTP is bound by residues Ser20–Thr27, Asp88–His92, and Asn142–Asp145.

It belongs to the TRAFAC class translation factor GTPase superfamily. Classic translation factor GTPase family. PrfC subfamily.

The protein resides in the cytoplasm. Its function is as follows. Increases the formation of ribosomal termination complexes and stimulates activities of RF-1 and RF-2. It binds guanine nucleotides and has strong preference for UGA stop codons. It may interact directly with the ribosome. The stimulation of RF-1 and RF-2 is significantly reduced by GTP and GDP, but not by GMP. This chain is Peptide chain release factor 3, found in Limosilactobacillus reuteri (strain DSM 20016) (Lactobacillus reuteri).